Consider the following 245-residue polypeptide: tRNA pseudouridine synthase A (245 aa).

Asp52 acts as the Nucleophile in catalysis. Position 111 (Tyr111) interacts with substrate.

It belongs to the tRNA pseudouridine synthase TruA family. In terms of assembly, homodimer.

It carries out the reaction uridine(38/39/40) in tRNA = pseudouridine(38/39/40) in tRNA. In terms of biological role, formation of pseudouridine at positions 38, 39 and 40 in the anticodon stem and loop of transfer RNAs. This is tRNA pseudouridine synthase A from Bradyrhizobium sp. (strain BTAi1 / ATCC BAA-1182).